The following is a 514-amino-acid chain: ATP synthase subunit alpha (514 aa).

169-176 serves as a coordination point for ATP; that stretch reads GDRQTGKT.

It belongs to the ATPase alpha/beta chains family. As to quaternary structure, F-type ATPases have 2 components, CF(1) - the catalytic core - and CF(0) - the membrane proton channel. CF(1) has five subunits: alpha(3), beta(3), gamma(1), delta(1), epsilon(1). CF(0) has three main subunits: a(1), b(2) and c(9-12). The alpha and beta chains form an alternating ring which encloses part of the gamma chain. CF(1) is attached to CF(0) by a central stalk formed by the gamma and epsilon chains, while a peripheral stalk is formed by the delta and b chains.

It localises to the cell membrane. The catalysed reaction is ATP + H2O + 4 H(+)(in) = ADP + phosphate + 5 H(+)(out). Its function is as follows. Produces ATP from ADP in the presence of a proton gradient across the membrane. The alpha chain is a regulatory subunit. The polypeptide is ATP synthase subunit alpha (Buchnera aphidicola subsp. Baizongia pistaciae (strain Bp)).